A 363-amino-acid polypeptide reads, in one-letter code: MVGMTRIQSAEPVWILFVLTLYSSVLMQVKPQLWSVGIERKKLFGETNTSVHCDEIRGLSRNQRSLCRTYNDHMYYVESGSKQGVEECQWQFRGQRWNCSLASNASPDKIIAVGSKETAFTYAITSGGVVQSIARACKSGNLMACGCSKRERPTGLGKDWNWGGCGDDIDYAYGFAHEFIDAQERDNSSPNDRRVKSHKAMNIHNNEAGRLSVVRASHTTCKCHGVSGSCSIKTCWLQTPQFRTIGDKLRQRYDDALEMRVTHRGQMKTRFSSDRNPSNIDLVYIDSSPDYCKVNHKLGILGTSGRECQLDSLAMDGCGLMCCGRGYTTKMVEVVKSCNCKFQWCCFVKCQQCKEKVLKHICN.

The first 27 residues, 1 to 27 (MVGMTRIQSAEPVWILFVLTLYSSVLM), serve as a signal peptide directing secretion. N-linked (GlcNAc...) asparagine glycosylation is found at asparagine 48 and asparagine 98. Intrachain disulfides connect cysteine 88-cysteine 99, cysteine 137-cysteine 145, cysteine 147-cysteine 165, cysteine 221-cysteine 235, cysteine 223-cysteine 230, cysteine 292-cysteine 323, cysteine 308-cysteine 318, cysteine 322-cysteine 362, cysteine 338-cysteine 353, cysteine 340-cysteine 350, and cysteine 345-cysteine 346. Serine 227 carries O-palmitoleoyl serine; by PORCN lipidation.

It belongs to the Wnt family. Palmitoleoylation is required for efficient binding to frizzled receptors. Depalmitoleoylation leads to Wnt signaling pathway inhibition.

The protein localises to the secreted. Its subcellular location is the extracellular space. It is found in the extracellular matrix. Functionally, ligand for members of the frizzled family of seven transmembrane receptors. Probable developmental protein. May be a signaling molecule which affects the development of discrete regions of tissues. Is likely to signal over only few cell diameters. In Halocynthia roretzi (Sea squirt), this protein is Protein Wnt-5 (WNT5).